The sequence spans 248 residues: Granzyme F (248 aa).

The first 18 residues, 1-18, serve as a signal peptide directing secretion; it reads MPPILILLTLLLPLRAGA. A propeptide spanning residues 19–20 is cleaved from the precursor; it reads EE. The Peptidase S1 domain occupies 21 to 246; the sequence is IIGGHEVKPH…YLPWISRNMK (226 aa). An intrachain disulfide couples Cys50 to Cys66. His65 acts as the Charge relay system in catalysis. N-linked (GlcNAc...) asparagine glycosylation is present at Asn106. Asp109 acts as the Charge relay system in catalysis. Disulfide bonds link Cys143–Cys210 and Cys175–Cys189. Asn154 carries an N-linked (GlcNAc...) asparagine glycan. The active-site Charge relay system is the Ser204. Asn223 carries N-linked (GlcNAc...) asparagine glycosylation.

This sequence belongs to the peptidase S1 family. Granzyme subfamily.

It localises to the cytolytic granule. In terms of biological role, this enzyme is probably necessary for target cell lysis in cell-mediated immune responses. The protein is Granzyme F (Gzmf) of Mus musculus (Mouse).